Here is a 186-residue protein sequence, read N- to C-terminus: Crossover junction endodeoxyribonuclease RuvC (186 aa).

Active-site residues include D14, E73, and D145. Mg(2+) contacts are provided by D14, E73, and D145. Positions 162 to 186 (GRSLPPSRGRRRSGSRQRWRDYRPS) are disordered. Residues 169–178 (RGRRRSGSRQ) are compositionally biased toward basic residues.

Belongs to the RuvC family. In terms of assembly, homodimer which binds Holliday junction (HJ) DNA. The HJ becomes 2-fold symmetrical on binding to RuvC with unstacked arms; it has a different conformation from HJ DNA in complex with RuvA. In the full resolvosome a probable DNA-RuvA(4)-RuvB(12)-RuvC(2) complex forms which resolves the HJ. Mg(2+) serves as cofactor.

It is found in the cytoplasm. The catalysed reaction is Endonucleolytic cleavage at a junction such as a reciprocal single-stranded crossover between two homologous DNA duplexes (Holliday junction).. Functionally, the RuvA-RuvB-RuvC complex processes Holliday junction (HJ) DNA during genetic recombination and DNA repair. Endonuclease that resolves HJ intermediates. Cleaves cruciform DNA by making single-stranded nicks across the HJ at symmetrical positions within the homologous arms, yielding a 5'-phosphate and a 3'-hydroxyl group; requires a central core of homology in the junction. The consensus cleavage sequence is 5'-(A/T)TT(C/G)-3'. Cleavage occurs on the 3'-side of the TT dinucleotide at the point of strand exchange. HJ branch migration catalyzed by RuvA-RuvB allows RuvC to scan DNA until it finds its consensus sequence, where it cleaves and resolves the cruciform DNA. The chain is Crossover junction endodeoxyribonuclease RuvC from Chromohalobacter salexigens (strain ATCC BAA-138 / DSM 3043 / CIP 106854 / NCIMB 13768 / 1H11).